A 298-amino-acid polypeptide reads, in one-letter code: Myoblast determination protein 1 homolog (298 aa).

The span at 53-73 (PEEHPHTRAPPREPTEEEHVR) shows a compositional bias: basic and acidic residues. The disordered stretch occupies residues 53-77 (PEEHPHTRAPPREPTEEEHVRAPSG). Residues 100–151 (DRRKAATMRERRRLSKVNEAFETLKRCTSTNPNQRLPKVEILRNAIRYIESL) enclose the bHLH domain. Disordered regions lie at residues 170–220 (SGES…GKSS) and 242–298 (CPIL…YQVL). 2 stretches are compositionally biased toward polar residues: residues 173–183 (SDASSPRSNCS) and 257–284 (CSPQ…LPQE).

Efficient DNA binding requires dimerization with another bHLH protein. Seems to form active heterodimers with ITF-2.

It localises to the nucleus. Its function is as follows. Acts as a transcriptional activator that promotes transcription of muscle-specific target genes and plays a role in muscle differentiation. Induces fibroblasts to differentiate into myoblasts. Interacts with and is inhibited by the twist protein. This interaction probably involves the basic domains of both proteins. The sequence is that of Myoblast determination protein 1 homolog (MYOD1) from Gallus gallus (Chicken).